The following is an 82-amino-acid chain: Small ribosomal subunit protein bS16 (82 aa).

It belongs to the bacterial ribosomal protein bS16 family.

The protein is Small ribosomal subunit protein bS16 of Actinobacillus succinogenes (strain ATCC 55618 / DSM 22257 / CCUG 43843 / 130Z).